The primary structure comprises 274 residues: Dermonecrotic toxin SdSicTox-betaIIB1ai (274 aa).

Residue H5 is part of the active site. Mg(2+) is bound by residues E25 and D27. H41 serves as the catalytic Nucleophile. 2 cysteine pairs are disulfide-bonded: C45–C51 and C47–C190. D85 contributes to the Mg(2+) binding site.

It belongs to the arthropod phospholipase D family. Class II subfamily. Mg(2+) is required as a cofactor. In terms of tissue distribution, expressed by the venom gland.

The protein localises to the secreted. It carries out the reaction an N-(acyl)-sphingosylphosphocholine = an N-(acyl)-sphingosyl-1,3-cyclic phosphate + choline. The catalysed reaction is an N-(acyl)-sphingosylphosphoethanolamine = an N-(acyl)-sphingosyl-1,3-cyclic phosphate + ethanolamine. The enzyme catalyses a 1-acyl-sn-glycero-3-phosphocholine = a 1-acyl-sn-glycero-2,3-cyclic phosphate + choline. It catalyses the reaction a 1-acyl-sn-glycero-3-phosphoethanolamine = a 1-acyl-sn-glycero-2,3-cyclic phosphate + ethanolamine. Its function is as follows. Dermonecrotic toxins cleave the phosphodiester linkage between the phosphate and headgroup of certain phospholipids (sphingolipid and lysolipid substrates), forming an alcohol (often choline) and a cyclic phosphate. This toxin acts on sphingomyelin (SM). It may also act on ceramide phosphoethanolamine (CPE), lysophosphatidylcholine (LPC) and lysophosphatidylethanolamine (LPE), but not on lysophosphatidylserine (LPS), and lysophosphatidylglycerol (LPG). It acts by transphosphatidylation, releasing exclusively cyclic phosphate products as second products. Induces dermonecrosis, hemolysis, increased vascular permeability, edema, inflammatory response, and platelet aggregation. The sequence is that of Dermonecrotic toxin SdSicTox-betaIIB1ai from Sicarius cf. damarensis (strain GJB-2008) (Six-eyed sand spider).